We begin with the raw amino-acid sequence, 118 residues long: Large ribosomal subunit protein bL20 (118 aa).

It belongs to the bacterial ribosomal protein bL20 family.

Its function is as follows. Binds directly to 23S ribosomal RNA and is necessary for the in vitro assembly process of the 50S ribosomal subunit. It is not involved in the protein synthesizing functions of that subunit. The sequence is that of Large ribosomal subunit protein bL20 from Pseudomonas entomophila (strain L48).